Here is a 228-residue protein sequence, read N- to C-terminus: C-type lectin domain-containing protein 88 (228 aa).

Positions 1 to 18 are cleaved as a signal peptide; the sequence is MQFIFFGTLFSGLLLVCA. Ser-27 carries an O-linked (Xyl...) (chondroitin sulfate) serine glycan. Positions 88 to 218 constitute a C-type lectin domain; that stretch reads YSDSCYWVET…CTYLFYSICE (131 aa). Cystine bridges form between Cys-109–Cys-217 and Cys-188–Cys-209. An N-linked (GlcNAc...) asparagine glycan is attached at Asn-220.

This Caenorhabditis elegans protein is C-type lectin domain-containing protein 88.